The chain runs to 409 residues: Small ribosomal subunit protein mS47 (409 aa).

The N-terminal 26 residues, Met1–Phe26, are a transit peptide targeting the mitochondrion. The segment at Ala388–Phe409 is disordered.

This sequence belongs to the enoyl-CoA hydratase/isomerase family. Mitochondrion-specific ribosomal protein mS47 subfamily. Component of the mitochondrial ribosome small subunit.

It localises to the mitochondrion. The sequence is that of Small ribosomal subunit protein mS47 from Arabidopsis thaliana (Mouse-ear cress).